Consider the following 331-residue polypeptide: Serine/threonine-protein phosphatase PP1 isozyme 7 (331 aa).

Residue Met-1 is modified to N-acetylmethionine. Mn(2+) contacts are provided by Asp-60, His-62, Asp-88, and Asn-120. His-121 functions as the Proton donor in the catalytic mechanism. His-169 and His-244 together coordinate Mn(2+).

This sequence belongs to the PPP phosphatase family. PP-1 subfamily. The cofactor is Mn(2+). In terms of tissue distribution, expressed in roots, rosettes and flowers.

It is found in the nucleus. Its subcellular location is the cytoplasm. The catalysed reaction is O-phospho-L-seryl-[protein] + H2O = L-seryl-[protein] + phosphate. The enzyme catalyses O-phospho-L-threonyl-[protein] + H2O = L-threonyl-[protein] + phosphate. With respect to regulation, phosphatase activity is strongly reduced by the protein phosphatase inhibitor 2 (I-2). Its function is as follows. Serine/threonine-protein phosphatase that possesses phosphatase activity toward para-nitrophenyl phosphate (pNPP) in vitro. The polypeptide is Serine/threonine-protein phosphatase PP1 isozyme 7 (Arabidopsis thaliana (Mouse-ear cress)).